Reading from the N-terminus, the 133-residue chain is Nickel-responsive regulator (133 aa).

His-76, His-87, His-89, and Cys-95 together coordinate Ni(2+).

The protein belongs to the transcriptional regulatory CopG/NikR family. Homotetramer. The cofactor is Ni(2+).

In terms of biological role, transcriptional repressor of the nikABCDE operon. Is active in the presence of excessive concentrations of intracellular nickel. In Salmonella choleraesuis (strain SC-B67), this protein is Nickel-responsive regulator.